The chain runs to 229 residues: 2-C-methyl-D-erythritol 4-phosphate cytidylyltransferase (229 aa).

The protein belongs to the IspD/TarI cytidylyltransferase family. IspD subfamily.

The enzyme catalyses 2-C-methyl-D-erythritol 4-phosphate + CTP + H(+) = 4-CDP-2-C-methyl-D-erythritol + diphosphate. It functions in the pathway isoprenoid biosynthesis; isopentenyl diphosphate biosynthesis via DXP pathway; isopentenyl diphosphate from 1-deoxy-D-xylulose 5-phosphate: step 2/6. Functionally, catalyzes the formation of 4-diphosphocytidyl-2-C-methyl-D-erythritol from CTP and 2-C-methyl-D-erythritol 4-phosphate (MEP). The sequence is that of 2-C-methyl-D-erythritol 4-phosphate cytidylyltransferase from Shouchella clausii (strain KSM-K16) (Alkalihalobacillus clausii).